The sequence spans 346 residues: Protein FAF1 (346 aa).

2 disordered regions span residues 22-120 (QFGS…LRSG) and 323-346 (KRDI…KSRR). The span at 31-65 (FEDKTKNIRTEVDTRDSSGDEIDNSDHGSDFKDGT) shows a compositional bias: basic and acidic residues. A compositionally biased stretch (acidic residues) spans 72-85 (SDEDSGNETAEENN).

As to quaternary structure, interacts with KRR1.

It localises to the nucleus. The protein localises to the nucleolus. In terms of biological role, required for pre-rRNA processing and 40S ribosomal subunit assembly. Seems to act in the processing of 35S rRNA at the A(0), A(1), and A(2) cleavage sites. The protein is Protein FAF1 (FAF1) of Saccharomyces cerevisiae (strain ATCC 204508 / S288c) (Baker's yeast).